The sequence spans 377 residues: Chaperone protein DnaJ (377 aa).

A J domain is found at D5–G70. The CR-type zinc-finger motif lies at G137–Q215. 8 residues coordinate Zn(2+): C150, C153, C167, C170, C189, C192, C203, and C206. CXXCXGXG motif repeat units lie at residues C150 to G157, C167 to G174, C189 to G196, and C203 to G210.

Belongs to the DnaJ family. As to quaternary structure, homodimer. Zn(2+) serves as cofactor.

The protein resides in the cytoplasm. Its function is as follows. Participates actively in the response to hyperosmotic and heat shock by preventing the aggregation of stress-denatured proteins and by disaggregating proteins, also in an autonomous, DnaK-independent fashion. Unfolded proteins bind initially to DnaJ; upon interaction with the DnaJ-bound protein, DnaK hydrolyzes its bound ATP, resulting in the formation of a stable complex. GrpE releases ADP from DnaK; ATP binding to DnaK triggers the release of the substrate protein, thus completing the reaction cycle. Several rounds of ATP-dependent interactions between DnaJ, DnaK and GrpE are required for fully efficient folding. Also involved, together with DnaK and GrpE, in the DNA replication of plasmids through activation of initiation proteins. This Cupriavidus taiwanensis (strain DSM 17343 / BCRC 17206 / CCUG 44338 / CIP 107171 / LMG 19424 / R1) (Ralstonia taiwanensis (strain LMG 19424)) protein is Chaperone protein DnaJ.